Here is a 1048-residue protein sequence, read N- to C-terminus: Putative truncated guanine nucleotide exchange factor SDC25 (1048 aa).

2 disordered regions span residues 208–242 (SKQGTSCSSETSHHSPSAPFQRRRRGTIFSNVSGS) and 419–444 (LNLDNAKDKKNGSQNTDIQEEEDEYE). The span at 212 to 224 (TSCSSETSHHSPS) shows a compositional bias: low complexity. The region spanning 578-710 (SNNRIKGGSK…LLKEVNQKFK (133 aa)) is the N-terminal Ras-GEF domain. Residues 748-995 (DPVLFATQLT…YQLSLIIEPK (248 aa)) enclose the Ras-GEF domain. A disordered region spans residues 997–1048 (RKKVVPNSNSNNKSQEKSRDDQTDEGKTSTKKDRFPKFQLHKTKKKAPKVSK). A compositionally biased stretch (basic and acidic residues) spans 1010–1032 (SQEKSRDDQTDEGKTSTKKDRFP). Residues 1035–1048 (QLHKTKKKAPKVSK) show a composition bias toward basic residues.

Promotes the exchange of Ras-bound GDP by GTP. The polypeptide is Putative truncated guanine nucleotide exchange factor SDC25 (SDC25) (Saccharomyces cerevisiae (strain ATCC 204508 / S288c) (Baker's yeast)).